The primary structure comprises 489 residues: 3-octaprenyl-4-hydroxybenzoate carboxy-lyase (489 aa).

Residue N172 participates in Mn(2+) binding. Prenylated FMN is bound by residues 175 to 177, 189 to 191, and 194 to 195; these read VYR, RWL, and RG. E240 lines the Mn(2+) pocket. The active-site Proton donor is D288.

It belongs to the UbiD family. In terms of assembly, homohexamer. Prenylated FMN is required as a cofactor. It depends on Mn(2+) as a cofactor.

It is found in the cell membrane. The enzyme catalyses a 4-hydroxy-3-(all-trans-polyprenyl)benzoate + H(+) = a 2-(all-trans-polyprenyl)phenol + CO2. Its pathway is cofactor biosynthesis; ubiquinone biosynthesis. In terms of biological role, catalyzes the decarboxylation of 3-octaprenyl-4-hydroxy benzoate to 2-octaprenylphenol, an intermediate step in ubiquinone biosynthesis. This is 3-octaprenyl-4-hydroxybenzoate carboxy-lyase from Wigglesworthia glossinidia brevipalpis.